The primary structure comprises 715 residues: Fatty acid oxidation complex subunit alpha (715 aa).

The tract at residues 1–190 is enoyl-CoA hydratase/isomerase; it reads MIYEGKAITV…KVGAVDAVVA (190 aa). Asp297 serves as a coordination point for substrate. Residues 312 to 715 form a 3-hydroxyacyl-CoA dehydrogenase region; the sequence is RDVKQAAVLG…MAKNGQSFFG (404 aa). NAD(+) is bound by residues Met325, Asp344, 401-403, Lys408, and Ser430; that span reads VVE. His451 functions as the For 3-hydroxyacyl-CoA dehydrogenase activity in the catalytic mechanism. An NAD(+)-binding site is contributed by Asn454. Substrate-binding residues include Asn501 and Tyr660.

In the N-terminal section; belongs to the enoyl-CoA hydratase/isomerase family. The protein in the C-terminal section; belongs to the 3-hydroxyacyl-CoA dehydrogenase family. Heterotetramer of two alpha chains (FadB) and two beta chains (FadA).

The catalysed reaction is a (3S)-3-hydroxyacyl-CoA + NAD(+) = a 3-oxoacyl-CoA + NADH + H(+). It carries out the reaction a (3S)-3-hydroxyacyl-CoA = a (2E)-enoyl-CoA + H2O. It catalyses the reaction a 4-saturated-(3S)-3-hydroxyacyl-CoA = a (3E)-enoyl-CoA + H2O. The enzyme catalyses (3S)-3-hydroxybutanoyl-CoA = (3R)-3-hydroxybutanoyl-CoA. The catalysed reaction is a (3Z)-enoyl-CoA = a 4-saturated (2E)-enoyl-CoA. It carries out the reaction a (3E)-enoyl-CoA = a 4-saturated (2E)-enoyl-CoA. It participates in lipid metabolism; fatty acid beta-oxidation. Involved in the aerobic and anaerobic degradation of long-chain fatty acids via beta-oxidation cycle. Catalyzes the formation of 3-oxoacyl-CoA from enoyl-CoA via L-3-hydroxyacyl-CoA. It can also use D-3-hydroxyacyl-CoA and cis-3-enoyl-CoA as substrate. This chain is Fatty acid oxidation complex subunit alpha, found in Pseudomonas fluorescens (strain SBW25).